We begin with the raw amino-acid sequence, 797 residues long: Kinesin-like protein KIF18B (797 aa).

The Kinesin motor domain occupies 11-352; that stretch reads TVAVVVRVRP…LKYANRAKEI (342 aa). ATP is bound at residue 110–117; it reads GATGAGKT. The stretch at 367–402 forms a coiled coil; it reads ISKYATICEQLKTEVADLQAKLRAYEDAARDAGKQI. Disordered stretches follow at residues 412-476, 528-564, 579-640, and 730-797; these read EEAV…PNRL, AAVS…PSVP, LSSP…KEPQ, and KGSS…SGPR. A compositionally biased stretch (polar residues) spans 594 to 608; it reads MSNTSRLETPHSLNT. The segment covering 731–744 has biased composition (low complexity); that stretch reads GSSIPKPSSISKGS.

Belongs to the TRAFAC class myosin-kinesin ATPase superfamily. Kinesin family.

It localises to the nucleus. It is found in the cytoplasm. The protein resides in the cytoskeleton. Functionally, may play an important role in microtubule plus-end depolymerizing activity in mitotic cells. This Gallus gallus (Chicken) protein is Kinesin-like protein KIF18B (KIF18B).